Reading from the N-terminus, the 209-residue chain is Geminin (209 aa).

The segment at 1 to 79 (MNPSMKQKQE…PESSENKNLG (79 aa)) is disordered. Over residues 7–16 (QKQEEIKENI) the composition is skewed to basic and acidic residues. Lysine 27 carries the N6-acetyllysine modification. Phosphoserine occurs at positions 34, 36, 49, 63, and 64. Residues 82 to 161 (TQESFDLMIK…AELIERLNGE (80 aa)) are necessary and sufficient for interaction with IDAS and CDT1. The stretch at 94–144 (PSSQYWKEVAEKRRKALYEALKENEKLHKEIEQKDNEIARLKKENKELAEV) forms a coiled coil. The disordered stretch occupies residues 164-209 (DNFESLDNQEFDSEEETVEDSLVEDSEIGTCAEGTVSSSTDAKPCI). The segment at 170 to 190 (DNQEFDSEEETVEDSLVEDSE) is homeodomain binding. The segment covering 170–190 (DNQEFDSEEETVEDSLVEDSE) has biased composition (acidic residues). Residue serine 184 is modified to Phosphoserine; by CK2. Residues 198 to 209 (TVSSSTDAKPCI) show a composition bias toward polar residues.

It belongs to the geminin family. Homotetramer. Interacts with CDT1; this inhibits binding of the MCM complex to origins of replication. The complex with CDT1 exists in two forms, a 'permissive' heterotrimer and an 'inhibitory' heterohexamer. Interacts (via coiled-coil domain) with IDAS (via coiled-coil domain); this targets GMNN to the nucleus. The heterodimer formed by GMNN and MCIDAS has much lower affinity for CDT1 than the GMNN homodimer. Interacts with a subset of Hox proteins, affinity increasing from anterior to posterior types, the strongest interaction being with HOXB1, HOXC9 and HOXD10. Interacts with LRWD1 from G1/S to mitosis. Phosphorylated during mitosis. Phosphorylation at Ser-184 by CK2 results in enhanced binding to Hox proteins and more potent inhibitory effect on Hox transcriptional activity.

Its subcellular location is the cytoplasm. It localises to the nucleus. Functionally, inhibits DNA replication by preventing the incorporation of MCM complex into pre-replication complex (pre-RC). It is degraded during the mitotic phase of the cell cycle. Its destruction at the metaphase-anaphase transition permits replication in the succeeding cell cycle. Inhibits histone acetyltransferase activity of KAT7/HBO1 in a CDT1-dependent manner, inhibiting histone H4 acetylation and DNA replication licensing. Inhibits the transcriptional activity of a subset of Hox proteins, enrolling them in cell proliferative control. This is Geminin (GMNN) from Homo sapiens (Human).